A 281-amino-acid polypeptide reads, in one-letter code: Cell growth regulator with EF hand domain protein 1 (281 aa).

A signal peptide spans 1 to 21 (MSRWLMQMLMLPLLLLPLGQA). EF-hand domains are found at residues 71-106 (NREQ…ALAP) and 115-150 (PVIL…APKR). Ca(2+) is bound by residues Asp-84, Asp-86, Asn-88, Gln-90, Glu-95, Asp-128, Asp-130, Asp-132, and Glu-139. The disordered stretch occupies residues 146-281 (EAPKRAESLP…HSIQLENDEI (136 aa)). Polar residues predominate over residues 169–184 (LLANSPLQSETQQSLG). Basic and acidic residues predominate over residues 185–213 (TKEEITSQVEAKRALEPEQEAGHHIETKV). Ser-217 and Ser-228 each carry phosphoserine. A compositionally biased stretch (basic and acidic residues) spans 234–256 (GPREDAERQVESKDNEGEAKDLP).

Post-translationally, probably digested extracellularly by an unknown serine protease generating extremely hydrophobic bioactive peptides. In terms of tissue distribution, expressed predominantly in whole brain and kidney, with limited expression in heart, lung, liver, and skeletal muscle and no expression in spleen and testis. Also expressed in pituitary gland, adrenal gland, digestive tract, and reproductive organs.

The protein localises to the secreted. Functionally, mediates cell-cell adhesion in a calcium-dependent manner. Able to inhibit growth in several cell lines. In Rattus norvegicus (Rat), this protein is Cell growth regulator with EF hand domain protein 1.